Reading from the N-terminus, the 338-residue chain is 3 beta-hydroxysteroid dehydrogenase type 7 (338 aa).

The Proton acceptor role is filled by Tyr-159. Residue Lys-163 coordinates NAD(+). 2 helical membrane-spanning segments follow: residues 258–278 and 280–300; these read LLPY…QWLL and PLVL…NTTF.

It belongs to the 3-beta-HSD family. As to expression, high levels in liver and lung, moderate levels in spleen, brain, heart, kidney, jejunum and testis. Up-regulated in 3Y1 cells upon growth arrest.

The protein resides in the endoplasmic reticulum membrane. It carries out the reaction 7alpha-hydroxycholesterol + NAD(+) = 7alpha-hydroxycholest-4-en-3-one + NADH + H(+). It catalyses the reaction 7alpha,25-dihydroxycholesterol + NAD(+) = 7alpha,25-dihydroxy-4-cholesten-3-one + NADH + H(+). The catalysed reaction is (25R)-cholest-5-en-3beta,7alpha,26-triol + NAD(+) = (25R)-7alpha,26-dihydroxycholest-4-en-3-one + NADH + H(+). The enzyme catalyses (24S)-7alpha-dihydroxycholesterol + NAD(+) = (24S)-7alpha,24-dihydroxycholest-4-en-3-one + NADH + H(+). It participates in lipid metabolism; steroid biosynthesis. The 3-beta-HSD enzymatic system plays a crucial role in the biosynthesis of all classes of hormonal steroids. HSD VII is active against four 7-alpha-hydroxylated sterols. Does not metabolize several different C(19/21) steroids as substrates. Involved in bile acid synthesis. Plays a key role in cell positioning and movement in lymphoid tissues by mediating degradation of 7-alpha,25-dihydroxycholesterol (7-alpha,25-OHC): 7-alpha,25-OHC acts as a ligand for the G protein-coupled receptor GPR183/EBI2, a chemotactic receptor for a number of lymphoid cells. In Rattus norvegicus (Rat), this protein is 3 beta-hydroxysteroid dehydrogenase type 7.